A 237-amino-acid chain; its full sequence is Ribonuclease PH (237 aa).

Residues Arg86 and 124 to 126 contribute to the phosphate site; that span reads GTR.

It belongs to the RNase PH family. In terms of assembly, homohexameric ring arranged as a trimer of dimers.

The enzyme catalyses tRNA(n+1) + phosphate = tRNA(n) + a ribonucleoside 5'-diphosphate. In terms of biological role, phosphorolytic 3'-5' exoribonuclease that plays an important role in tRNA 3'-end maturation. Removes nucleotide residues following the 3'-CCA terminus of tRNAs; can also add nucleotides to the ends of RNA molecules by using nucleoside diphosphates as substrates, but this may not be physiologically important. Probably plays a role in initiation of 16S rRNA degradation (leading to ribosome degradation) during starvation. The sequence is that of Ribonuclease PH from Rhodopseudomonas palustris (strain HaA2).